The chain runs to 871 residues: Scavenger receptor class F member 2 (871 aa).

The tract at residues 1-20 is disordered; that stretch reads MEGAGPRGAGPARRRGAGGP. An N-terminal signal peptide occupies residues 1 to 43; that stretch reads MEGAGPRGAGPARRRGAGGPPSPLLPSLLLLLLLWMLPDTVAP. Topologically, residues 44-441 are extracellular; the sequence is QELNPRGRNV…ACHLETNQRK (398 aa). 6 EGF-like domains span residues 71–110, 122–153, 148–182, 183–212, 213–241, and 236–270; these read QGDE…ANCD, CKEL…ARCE, WGAR…AQCA, SACY…RSCN, NQCA…ARCD, and FGAR…KYCR. Intrachain disulfides connect cysteine 75–cysteine 86, cysteine 80–cysteine 98, cysteine 100–cysteine 109, cysteine 126–cysteine 134, cysteine 128–cysteine 141, cysteine 143–cysteine 152, cysteine 156–cysteine 163, cysteine 158–cysteine 170, cysteine 172–cysteine 181, cysteine 185–cysteine 193, cysteine 187–cysteine 200, cysteine 202–cysteine 211, cysteine 215–cysteine 222, cysteine 217–cysteine 229, cysteine 231–cysteine 240, cysteine 244–cysteine 251, cysteine 246–cysteine 258, and cysteine 260–cysteine 269. An N-linked (GlcNAc...) asparagine glycan is attached at asparagine 83. N-linked (GlcNAc...) asparagine glycans are attached at residues asparagine 310 and asparagine 365. One can recognise an EGF-like 7 domain in the interval 372–403; that stretch reads CAFVCADCGSGHCDFQSGRCLCSPGVHGPHCN. Cystine bridges form between cysteine 376–cysteine 384, cysteine 379–cysteine 391, and cysteine 393–cysteine 402. Residue asparagine 403 is glycosylated (N-linked (GlcNAc...) asparagine). A helical membrane pass occupies residues 442–462; it reads GVMGAGALLVLLVCLLLSLLG. The Cytoplasmic segment spans residues 463-871; it reads CCCACRGKDP…ELGRAGAPTL (409 aa). Serine 551 is modified (phosphoserine). Residues 570–579 show a composition bias toward basic and acidic residues; sequence EAPAESRDPE. The disordered stretch occupies residues 570-871; the sequence is EAPAESRDPE…ELGRAGAPTL (302 aa). Serine 613 is modified (phosphoserine). A Phosphotyrosine modification is found at tyrosine 628. Over residues 632-643 the composition is skewed to basic and acidic residues; the sequence is ARREARPARARG. 5 positions are modified to phosphoserine: serine 651, serine 653, serine 710, serine 718, and serine 742. Basic and acidic residues predominate over residues 705 to 725; that stretch reads TPSDKSAHTVEHGSPRTRDPT. Low complexity predominate over residues 821–831; the sequence is PPATETPGPEK. The segment covering 844–856 has biased composition (basic residues); sequence KKTPIQKPPRKKS. Residues 861–871 show a composition bias toward low complexity; that stretch reads GELGRAGAPTL.

In terms of assembly, homophilic and heterophilic interaction via its extracellular domain. Interacts with SCARF1. The heterophilic interaction with SCARF1, which is stronger than the homophilic interaction with itself, is suppressed by the presence of SCARF1 ligand such as Ac-LDL. In terms of tissue distribution, predominantly expressed in endothelial cells. Expressed in heart, placenta, lung, kidney, spleen, small intestine and ovary.

It is found in the membrane. Probable adhesion protein, which mediates homophilic and heterophilic interactions. In contrast to SCARF1, it poorly mediates the binding and degradation of acetylated low density lipoprotein (Ac-LDL). The polypeptide is Scavenger receptor class F member 2 (SCARF2) (Homo sapiens (Human)).